A 432-amino-acid chain; its full sequence is E3 ubiquitin-protein ligase RNF135 (432 aa).

Residues 21 to 63 (CIICQGLLDWPATLPCGHSFCRHCLEALWGARDARRWACPTCR) form an RING-type zinc finger. The disordered stretch occupies residues 95–121 (GSDPAHCPCPGSSSLSSAAARPRRRPE). Residues 102–114 (PCPGSSSLSSAAA) are compositionally biased toward low complexity. 2 coiled-coil regions span residues 121–156 (ELQRVAVEKSITEVAQELTELVEHLVDIVRSLQNQR) and 191–216 (DTAAGKIRDILHDLEEIQEKLQESVT). The B30.2/SPRY domain maps to 241-432 (PDQSHPALRR…NYLIIKQVKV (192 aa)).

In terms of assembly, homodimer. Interacts (homodimer) with RIGI (double-stranded RNA-bound oligomeric form); involved in both RIGI ubiquitination, oligomerization into filaments associated with viral RNAs and the bridging of these filaments. Interacts with UBE2D3 and UBE2N; E2 ubiquitin ligases involved in RNF135-mediated ubiquitination of RIGI and activation of the RIG-I signaling pathway. Interacts with PCBP2. Post-translationally, (Microbial infection) Cleaved and inactivated by hepatitis C virus NS3/NS4A. In terms of tissue distribution, expressed in skeletal muscle, spleen, kidney, placenta, prostate, stomach, thyroid and tongue. Also weakly expressed in heart, thymus, liver and lung.

The protein localises to the cytoplasm. Its subcellular location is the stress granule. The catalysed reaction is S-ubiquitinyl-[E2 ubiquitin-conjugating enzyme]-L-cysteine + [acceptor protein]-L-lysine = [E2 ubiquitin-conjugating enzyme]-L-cysteine + N(6)-ubiquitinyl-[acceptor protein]-L-lysine.. Its pathway is protein modification; protein ubiquitination. Its function is as follows. E2-dependent E3 ubiquitin-protein ligase that functions as a RIGI coreceptor in the sensing of viral RNAs in cell cytoplasm and the activation of the antiviral innate immune response. Together with the UBE2D3, UBE2N and UB2V1 E2 ligases, catalyzes the 'Lys-63'-linked polyubiquitination of RIGI oligomerized on viral RNAs, an essential step in the activation of the RIG-I signaling pathway. Through a ubiquitin-independent parallel mechanism, which consists in bridging RIGI filaments forming on longer viral RNAs, further activates the RIG-I signaling pathway. This second mechanism that synergizes with the ubiquitin-dependent one would thereby allow an RNA length-dependent regulation of the RIG-I signaling pathway. Associated with the E2 ligase UBE2N, also constitutively synthesizes unanchored 'Lys-63'-linked polyubiquitin chains that may also activate the RIG-I signaling pathway. The sequence is that of E3 ubiquitin-protein ligase RNF135 from Homo sapiens (Human).